Here is a 61-residue protein sequence, read N- to C-terminus: Metallothionein-1D (61 aa).

The segment at 1–29 (MDPNCSCSTGGSCSCATSCTCKACRCTSC) is beta. A divalent metal cation-binding residues include Cys5, Cys7, Cys13, Cys15, Cys19, Cys21, Cys24, Cys26, Cys29, Cys33, Cys34, Cys36, Cys37, Cys41, Cys44, Cys48, Cys50, Cys57, Cys59, and Cys60. The tract at residues 30 to 61 (KKSCCSCCPAGCAKCAQGCICKGASDKCSCCA) is alpha.

It belongs to the metallothionein superfamily. Type 1 family. In terms of assembly, monomer.

Functionally, metallothioneins have a high content of cysteine residues that bind various heavy metals; these proteins are transcriptionally regulated by both heavy metals and glucocorticoids. In Sus scrofa (Pig), this protein is Metallothionein-1D (MT1D).